Consider the following 167-residue polypeptide: Small ribosomal subunit protein uS5 (167 aa).

One can recognise an S5 DRBM domain in the interval 12–75 (LQEKLIAVNR…EKARRNMVTV (64 aa)).

This sequence belongs to the universal ribosomal protein uS5 family. Part of the 30S ribosomal subunit. Contacts proteins S4 and S8.

With S4 and S12 plays an important role in translational accuracy. Its function is as follows. Located at the back of the 30S subunit body where it stabilizes the conformation of the head with respect to the body. The polypeptide is Small ribosomal subunit protein uS5 (Shewanella oneidensis (strain ATCC 700550 / JCM 31522 / CIP 106686 / LMG 19005 / NCIMB 14063 / MR-1)).